The sequence spans 469 residues: Cell division protein FtsP (469 aa).

Residues 1 to 29 constitute a signal peptide (tat-type signal); sequence MPRLSRRQLLKTAAISTALSTVPAPLLAA. The 59-residue stretch at 228-286 folds into the Plastocyanin-like domain; sequence IRLRLLNASLARAYDLRLDNDQEMLLIAQDLSFLPKAKSVKSLVLSPGERAEILVNMNE.

The protein belongs to the FtsP family. Post-translationally, predicted to be exported by the Tat system. The position of the signal peptide cleavage has not been experimentally proven.

It localises to the periplasm. Functionally, cell division protein that is required for growth during stress conditions. May be involved in protecting or stabilizing the divisomal assembly under conditions of stress. The polypeptide is Cell division protein FtsP (Haemophilus influenzae (strain 86-028NP)).